Here is a 194-residue protein sequence, read N- to C-terminus: GTP cyclohydrolase 1 (194 aa).

The Zn(2+) site is built by C83, H86, and C155.

Belongs to the GTP cyclohydrolase I family. As to quaternary structure, toroid-shaped homodecamer, composed of two pentamers of five dimers.

It carries out the reaction GTP + H2O = 7,8-dihydroneopterin 3'-triphosphate + formate + H(+). It participates in cofactor biosynthesis; 7,8-dihydroneopterin triphosphate biosynthesis; 7,8-dihydroneopterin triphosphate from GTP: step 1/1. This chain is GTP cyclohydrolase 1 (folE), found in Streptococcus pyogenes serotype M1.